We begin with the raw amino-acid sequence, 1217 residues long: Inactive disease resistance protein RPS4 (1217 aa).

The TIR domain maps to 14–175 (PQHQVFINFR…EIVKAVKTAL (162 aa)). Glu88 is a catalytic residue. The region spanning 211–472 (EQRLKDLEEK…FRSQDKDYVE (262 aa)) is the NB-ARC domain. 11 LRR repeats span residues 260–285 (HALI…LLGE), 436–459 (PNIV…AFLD), 614–636 (LKEV…DFNP), 637–659 (INLV…DKDT), 682–706 (AEKL…MKKM), 708–728 (MLAF…EMNL), 729–749 (ISLK…PLIS), 750–774 (DNIE…KLQR), 796–818 (LKAL…EIDI), 819–842 (SFLN…SVQY), and 861–887 (LSQL…NLQC). The tract at residues 1162–1195 (TEGVDGRVKKKKKTRMDNGRPKKKQRSGRDDNQT) is disordered. The Nuclear localization signal signature appears at 1170 to 1177 (KKKKKTRM).

In terms of assembly, interacts with EDS1.

It localises to the nucleus. It carries out the reaction NAD(+) + H2O = ADP-D-ribose + nicotinamide + H(+). The sequence is that of Inactive disease resistance protein RPS4 (RPS4) from Arabidopsis thaliana (Mouse-ear cress).